An 89-amino-acid polypeptide reads, in one-letter code: Small ribosomal subunit protein uS17 (89 aa).

It belongs to the universal ribosomal protein uS17 family. Part of the 30S ribosomal subunit.

In terms of biological role, one of the primary rRNA binding proteins, it binds specifically to the 5'-end of 16S ribosomal RNA. The polypeptide is Small ribosomal subunit protein uS17 (Bacteroides fragilis (strain ATCC 25285 / DSM 2151 / CCUG 4856 / JCM 11019 / LMG 10263 / NCTC 9343 / Onslow / VPI 2553 / EN-2)).